Consider the following 205-residue polypeptide: UPF0301 protein AZC_0488 (205 aa).

Belongs to the UPF0301 (AlgH) family.

In Azorhizobium caulinodans (strain ATCC 43989 / DSM 5975 / JCM 20966 / LMG 6465 / NBRC 14845 / NCIMB 13405 / ORS 571), this protein is UPF0301 protein AZC_0488.